Here is a 483-residue protein sequence, read N- to C-terminus: UDP-N-acetylmuramate--L-alanine ligase (483 aa).

122–128 contributes to the ATP binding site; the sequence is GSHGKTT.

The protein belongs to the MurCDEF family.

The protein localises to the cytoplasm. The catalysed reaction is UDP-N-acetyl-alpha-D-muramate + L-alanine + ATP = UDP-N-acetyl-alpha-D-muramoyl-L-alanine + ADP + phosphate + H(+). The protein operates within cell wall biogenesis; peptidoglycan biosynthesis. Functionally, cell wall formation. This is UDP-N-acetylmuramate--L-alanine ligase from Synechococcus sp. (strain CC9311).